Reading from the N-terminus, the 365-residue chain is tRNA-specific 2-thiouridylase MnmA (365 aa).

ATP-binding positions include 14 to 21 (AMSGGVDS) and Leu40. The active-site Nucleophile is the Cys108. A disulfide bond links Cys108 and Cys204. Gly132 lines the ATP pocket. Residues 154–156 (KDQ) form an interaction with tRNA region. Residue Cys204 is the Cysteine persulfide intermediate of the active site.

The protein belongs to the MnmA/TRMU family.

It is found in the cytoplasm. It carries out the reaction S-sulfanyl-L-cysteinyl-[protein] + uridine(34) in tRNA + AH2 + ATP = 2-thiouridine(34) in tRNA + L-cysteinyl-[protein] + A + AMP + diphosphate + H(+). Its function is as follows. Catalyzes the 2-thiolation of uridine at the wobble position (U34) of tRNA, leading to the formation of s(2)U34. The protein is tRNA-specific 2-thiouridylase MnmA of Rickettsia rickettsii (strain Iowa).